The following is a 764-amino-acid chain: 5-methyltetrahydropteroyltriglutamate--homocysteine methyltransferase (764 aa).

Residues 16–19 (RELK) and K121 each bind 5-methyltetrahydropteroyltri-L-glutamate. Residues 440–442 (IGS) and E493 each bind L-homocysteine. Residues 440–442 (IGS) and E493 each bind L-methionine. 5-methyltetrahydropteroyltri-L-glutamate contacts are provided by residues 524–525 (RC) and W570. Residue D608 participates in L-homocysteine binding. Residue D608 participates in L-methionine binding. A 5-methyltetrahydropteroyltri-L-glutamate-binding site is contributed by E614. Zn(2+)-binding residues include H650, C652, and E674. H703 (proton donor) is an active-site residue. Position 735 (C735) interacts with Zn(2+).

The protein belongs to the vitamin-B12 independent methionine synthase family. Zn(2+) is required as a cofactor.

The catalysed reaction is 5-methyltetrahydropteroyltri-L-glutamate + L-homocysteine = tetrahydropteroyltri-L-glutamate + L-methionine. It participates in amino-acid biosynthesis; L-methionine biosynthesis via de novo pathway; L-methionine from L-homocysteine (MetE route): step 1/1. Functionally, catalyzes the transfer of a methyl group from 5-methyltetrahydrofolate to homocysteine resulting in methionine formation. The sequence is that of 5-methyltetrahydropteroyltriglutamate--homocysteine methyltransferase from Burkholderia orbicola (strain MC0-3).